The chain runs to 532 residues: MISYEYCDSSDSFYFNDIQDFDFNPWIEVKSVSEKGRCVFSKKFIPKGTMVFRDIPYAAIVDNQFKRNICTTCFKILLESNRHNFQTCPSCFQVNYCSNYCKQYSKIETKHTELECKWIQDFTVSFKHQMAEDDRNIVLLVLKILARRIHEKQSTIFHNKPLTTNTFETCTSNNNNIDLLPMIPNDIPDLIDHLDDYFINSKNNNEFENEEEEEEEQEQKGEGEQEENENNENNEKVKKKVIIIDDNEKEKEEIKKFNKIWKNDFKRLINIAKVIQIIIDDSIDSLENIKCDYGFVDNQGDTEMVDNSIDPKGLDKLVDNLSSSDLNILRLLCKIRANYFGLWNSAYKPIPLNSIDDDDDDNNNNKEKPNNDYLWCGSGVYLKLSLFNHSCFPNCTTLIEYNINKKNSNNNNGNNGNNNSYGDTNQLTISIITLRDIEENQELLITYIPLNQKINDRVKSLKSNWLFQCDCKRCHFEKINENQTEKIYKDSCCTNQKCSGGLLIPLEQNSTQGICRVCKNTYTLPTVFYPLK.

The SET domain occupies 25–448 (PWIEVKSVSE…ENQELLITYI (424 aa)). The MYND-type; degenerate zinc-finger motif lies at 70 to 116 (CTTCFKILLESNRHNFQTCPSCFQVNYCSNYCKQYSKIETKHTELEC). Positions 199-240 (INSKNNNEFENEEEEEEEQEQKGEGEQEENENNENNEKVKKK) form a coiled coil. Residues 204 to 234 (NNEFENEEEEEEEQEQKGEGEQEENENNENN) form a disordered region. Acidic residues predominate over residues 207 to 217 (FENEEEEEEEQ).

The protein belongs to the class V-like SAM-binding methyltransferase superfamily.

Probable methyltransferase. The sequence is that of SET and MYND domain-containing protein DDB_G0288495 from Dictyostelium discoideum (Social amoeba).